A 150-amino-acid polypeptide reads, in one-letter code: Leukotriene C4 synthase (150 aa).

Topologically, residues 1–6 (MKEETA) are cytoplasmic. Residues 7-27 (LLATVTLLGVLLQAYFSLQVI) traverse the membrane as a helical segment. The Lumenal portion of the chain corresponds to 28-48 (SARRTFHVSPPLTSGPPEFER). A glutathione-binding site is contributed by Arg30. Arg31 functions as the Proton donor in the catalytic mechanism. Ser36 carries the post-translational modification Phosphoserine. The chain crosses the membrane as a helical span at residues 49–69 (VFRAQVNCSEYFPLFLATLWV). Glutathione is bound by residues 51–55 (RAQVN) and 58–59 (EY). The Cytoplasmic segment spans residues 70–73 (AGIF). Residues 74-94 (FHEGAAALCGLFYLFARLRYF) form a helical membrane-spanning segment. Residue 93–97 (YFQGY) coordinates glutathione. Residues 95-104 (QGYARSAQHR) are Lumenal-facing. Arg104 (proton acceptor) is an active-site residue. The helical transmembrane segment at 105–124 (LDPLYASARALWLLVAMAAL) threads the bilayer. Topologically, residues 125 to 150 (GLLVHFLPGTLRAALFRWLQVLLPMA) are cytoplasmic.

This sequence belongs to the MAPEG family. Homotrimer. Interacts with ALOX5AP and ALOX5. Phosphorylation at Ser-36 by RPS6KB1 inhibits the leukotriene-C4 synthase activity.

Its subcellular location is the nucleus outer membrane. The protein resides in the endoplasmic reticulum membrane. It is found in the nucleus membrane. The enzyme catalyses leukotriene C4 = leukotriene A4 + glutathione. It catalyses the reaction (13S,14S)-epoxy-(4Z,7Z,9E,11E,16Z,19Z)-docosahexaenoate + glutathione = (13R)-S-glutathionyl-(14S)-hydroxy-(4Z,7Z,9E,11E,16Z,19Z)-docosahexaenoate. It participates in lipid metabolism; leukotriene C4 biosynthesis. Inhibited by MK886. In terms of biological role, catalyzes the conjugation of leukotriene A4 with reduced glutathione (GSH) to form leukotriene C4 with high specificity. Can also catalyze the transfer of a glutathionyl group from glutathione (GSH) to 13(S),14(S)-epoxy-docosahexaenoic acid to form maresin conjugate in tissue regeneration 1 (MCTR1), a bioactive lipid mediator that possess potent anti-inflammatory and proresolving actions. The chain is Leukotriene C4 synthase (Ltc4s) from Rattus norvegicus (Rat).